A 205-amino-acid chain; its full sequence is Dephospho-CoA kinase (205 aa).

A DPCK domain is found at 13–205; that stretch reads RIGLTGGIAS…KWINTIREIL (193 aa). 21 to 26 is a binding site for ATP; that stretch reads ASGKST.

The protein belongs to the CoaE family.

The protein localises to the cytoplasm. The enzyme catalyses 3'-dephospho-CoA + ATP = ADP + CoA + H(+). Its pathway is cofactor biosynthesis; coenzyme A biosynthesis; CoA from (R)-pantothenate: step 5/5. Catalyzes the phosphorylation of the 3'-hydroxyl group of dephosphocoenzyme A to form coenzyme A. The protein is Dephospho-CoA kinase of Prochlorococcus marinus (strain MIT 9312).